We begin with the raw amino-acid sequence, 132 residues long: Small ribosomal subunit protein uS8 (132 aa).

Belongs to the universal ribosomal protein uS8 family. As to quaternary structure, part of the 30S ribosomal subunit. Contacts proteins S5 and S12.

One of the primary rRNA binding proteins, it binds directly to 16S rRNA central domain where it helps coordinate assembly of the platform of the 30S subunit. The protein is Small ribosomal subunit protein uS8 of Syntrophotalea carbinolica (strain DSM 2380 / NBRC 103641 / GraBd1) (Pelobacter carbinolicus).